The primary structure comprises 136 residues: Protein PsiE (136 aa).

A run of 4 helical transmembrane segments spans residues Ile15–Leu35, Tyr55–Val75, Phe82–Ile102, and Pro108–Cys128.

Belongs to the PsiE family.

The protein resides in the cell inner membrane. This is Protein PsiE from Salmonella arizonae (strain ATCC BAA-731 / CDC346-86 / RSK2980).